The primary structure comprises 417 residues: Gamma-glutamyl phosphate reductase (417 aa).

This sequence belongs to the gamma-glutamyl phosphate reductase family.

The protein localises to the cytoplasm. It carries out the reaction L-glutamate 5-semialdehyde + phosphate + NADP(+) = L-glutamyl 5-phosphate + NADPH + H(+). It participates in amino-acid biosynthesis; L-proline biosynthesis; L-glutamate 5-semialdehyde from L-glutamate: step 2/2. Its function is as follows. Catalyzes the NADPH-dependent reduction of L-glutamate 5-phosphate into L-glutamate 5-semialdehyde and phosphate. The product spontaneously undergoes cyclization to form 1-pyrroline-5-carboxylate. This is Gamma-glutamyl phosphate reductase from Escherichia coli O7:K1 (strain IAI39 / ExPEC).